A 255-amino-acid polypeptide reads, in one-letter code: MIDLQEILANMNPNQKINYDRVMQQMAKVWEKESVRPSILMHVCCAPCSTYTLEYLTQFADITVYFANSNIHPKDEYHRRAYVTQQFVSEFNAKTGNTVQFLEADYVPNEYVRQVRGLEEEPEGGDRCRVCFDYRLDKTAQKAVELGFDYFASALTISPHKNSQTINDVGIDVQKVYTTKYLPSDFKKNNGYRRSVEMCEEYDIYRQCYCGCVYAAKMQGIDLVQVKKDAKAFMADKDLDNDFTHIRFSYRGDEM.

[4Fe-4S] cluster contacts are provided by Cys44, Cys45, Cys128, and Cys131. Cys210 and Cys212 are joined by a disulfide.

Belongs to the QueH family.

It catalyses the reaction epoxyqueuosine(34) in tRNA + AH2 = queuosine(34) in tRNA + A + H2O. It functions in the pathway tRNA modification; tRNA-queuosine biosynthesis. Functionally, catalyzes the conversion of epoxyqueuosine (oQ) to queuosine (Q), which is a hypermodified base found in the wobble positions of tRNA(Asp), tRNA(Asn), tRNA(His) and tRNA(Tyr). The polypeptide is Epoxyqueuosine reductase QueH (Streptococcus pyogenes serotype M1).